The primary structure comprises 632 residues: Cell pattern formation-associated protein stuA (632 aa).

The span at 1–20 (MNQTQSYMDVHTSHFSSPQP) shows a compositional bias: polar residues. Residues 1–27 (MNQTQSYMDVHTSHFSSPQPYGSHGAT) are disordered. The region spanning 128–234 (RVTATLWEDE…HNIGGLLYHP (107 aa)) is the HTH APSES-type domain. Residues 162–183 (GTKLLNVAGMTRGRRDGILKSE) constitute a DNA-binding region (H-T-H motif). 4 disordered regions span residues 246 to 315 (DSQQ…ASSL), 340 to 386 (QNVP…KSYY), 403 to 460 (AHSL…QQEP), and 473 to 632 (NRNS…MRRR). 4 stretches are compositionally biased toward polar residues: residues 254–264 (GSQTARTSQGP), 275–295 (MNGS…QTNG), 340–354 (QNVP…TRSM), and 364–376 (GNNL…YQNQ). Positions 377-386 (PAYDSSKSYY) are enriched in low complexity. The segment covering 428 to 438 (EQEHDEVKVDR) has biased composition (basic and acidic residues). Positions 473–506 (NRNSYTYTTNPSVSSLSGDHSQLGGSPSHQNGSD) are enriched in polar residues. A compositionally biased stretch (low complexity) spans 558 to 576 (AYASNYSGYSSVNGSSMGS). Residues 578-604 (KRMRDDDDDHLSRSDGRENEYETKRRK) form a nuclear localization domain region. The segment covering 579–600 (RMRDDDDDHLSRSDGRENEYET) has biased composition (basic and acidic residues).

This sequence belongs to the EFG1/PHD1/stuA family.

The protein localises to the nucleus. Its function is as follows. Transcription factor that regulates asexual reproduction. Binds the StuA-response elements (StRE) with the consensus sequence 5'-(A/T)CGCG(T/A)N(A/C)-3' at the promoters of target genes. Required for accurate spatial organization of the developing conidiophore. Primarily involved in the formation of the uninucleate sterigmata, which arise by budding in this multicellular structure. Required for metula and phialide formation during conidiation but is not required for dimorphic growth. This is Cell pattern formation-associated protein stuA from Talaromyces marneffei (Penicillium marneffei).